Consider the following 105-residue polypeptide: Large ribosomal subunit protein uL24 (105 aa).

This sequence belongs to the universal ribosomal protein uL24 family. Part of the 50S ribosomal subunit.

Its function is as follows. One of two assembly initiator proteins, it binds directly to the 5'-end of the 23S rRNA, where it nucleates assembly of the 50S subunit. Functionally, one of the proteins that surrounds the polypeptide exit tunnel on the outside of the subunit. This chain is Large ribosomal subunit protein uL24, found in Thermotoga petrophila (strain ATCC BAA-488 / DSM 13995 / JCM 10881 / RKU-1).